Consider the following 157-residue polypeptide: MNPDIVNLESNLNGEGLRIGVVMARFNLPVCEGLRDACLDELLALGVEPTDITFVTVPGALEIPLALQAMAQNEDDSYDALVALGAVIRGETYHFELVSNEAGAALTRVGLDFDIPVANGVLTCDTDEQAEARMAEKGRDCARCAVEMANLQKAFYD.

5-amino-6-(D-ribitylamino)uracil contacts are provided by residues F26, 60-62 (ALE), and 86-88 (AVI). 91 to 92 (ET) contributes to the (2S)-2-hydroxy-3-oxobutyl phosphate binding site. Residue H94 is the Proton donor of the active site. N119 serves as a coordination point for 5-amino-6-(D-ribitylamino)uracil. Position 133 (R133) interacts with (2S)-2-hydroxy-3-oxobutyl phosphate.

The protein belongs to the DMRL synthase family.

The enzyme catalyses (2S)-2-hydroxy-3-oxobutyl phosphate + 5-amino-6-(D-ribitylamino)uracil = 6,7-dimethyl-8-(1-D-ribityl)lumazine + phosphate + 2 H2O + H(+). It functions in the pathway cofactor biosynthesis; riboflavin biosynthesis; riboflavin from 2-hydroxy-3-oxobutyl phosphate and 5-amino-6-(D-ribitylamino)uracil: step 1/2. Catalyzes the formation of 6,7-dimethyl-8-ribityllumazine by condensation of 5-amino-6-(D-ribitylamino)uracil with 3,4-dihydroxy-2-butanone 4-phosphate. This is the penultimate step in the biosynthesis of riboflavin. This Laribacter hongkongensis (strain HLHK9) protein is 6,7-dimethyl-8-ribityllumazine synthase.